A 363-amino-acid chain; its full sequence is 3-dehydroquinate synthase (363 aa).

NAD(+) contacts are provided by residues 75–80 (DAEEGK), 109–113 (GAVTD), 133–134 (TS), lysine 146, lysine 155, and 173–176 (TLDT). Residues glutamate 188, histidine 251, and histidine 267 each contribute to the Zn(2+) site.

The protein belongs to the sugar phosphate cyclases superfamily. Dehydroquinate synthase family. Co(2+) serves as cofactor. Requires Zn(2+) as cofactor. NAD(+) is required as a cofactor.

It is found in the cytoplasm. The catalysed reaction is 7-phospho-2-dehydro-3-deoxy-D-arabino-heptonate = 3-dehydroquinate + phosphate. It participates in metabolic intermediate biosynthesis; chorismate biosynthesis; chorismate from D-erythrose 4-phosphate and phosphoenolpyruvate: step 2/7. Its function is as follows. Catalyzes the conversion of 3-deoxy-D-arabino-heptulosonate 7-phosphate (DAHP) to dehydroquinate (DHQ). The protein is 3-dehydroquinate synthase of Pseudarthrobacter chlorophenolicus (strain ATCC 700700 / DSM 12829 / CIP 107037 / JCM 12360 / KCTC 9906 / NCIMB 13794 / A6) (Arthrobacter chlorophenolicus).